The chain runs to 555 residues: Glucose-6-phosphate isomerase (555 aa).

Residues 169–170 (GS), 219–224 (SKTFTT), Gln-364, Glu-368, His-399, and Lys-521 each bind D-glucose 6-phosphate. The active-site Proton donor is Glu-368. Residues His-399 and Lys-521 contribute to the active site.

The protein belongs to the GPI family. As to quaternary structure, homodimer.

It is found in the cytoplasm. The protein resides in the cytosol. It carries out the reaction alpha-D-glucose 6-phosphate = beta-D-fructose 6-phosphate. The protein operates within carbohydrate degradation; glycolysis; D-glyceraldehyde 3-phosphate and glycerone phosphate from D-glucose: step 2/4. In terms of biological role, in the cytoplasm, catalyzes the conversion of glucose-6-phosphate to fructose-6-phosphate, the second step in glycolysis, and the reverse reaction during gluconeogenesis. This Eremothecium gossypii (strain ATCC 10895 / CBS 109.51 / FGSC 9923 / NRRL Y-1056) (Yeast) protein is Glucose-6-phosphate isomerase (PGI1).